The sequence spans 350 residues: Melatonin receptor type 1A-A (350 aa).

Residues 1 to 29 lie on the Extracellular side of the membrane; sequence MFMNGSSLNSSALDPSEQALQRPPWVTTT. Residues N4 and N9 are each glycosylated (N-linked (GlcNAc...) asparagine). The chain crosses the membrane as a helical span at residues 30 to 50; it reads LGCFLIFTIVVDILGNLLVIF. The Cytoplasmic portion of the chain corresponds to 51-63; that stretch reads SVYRNKKLQNAGN. A helical transmembrane segment spans residues 64–84; sequence IFVVSLAVADLVVAIYPYPLV. Residues 85–101 are Extracellular-facing; the sequence is LTSIFHRGWNLGYMHCQ. C100 and C177 are disulfide-bonded. Residues 102–122 form a helical membrane-spanning segment; sequence ISGFLMGVSVIGSIFNITGIA. Residues 123-144 are Cytoplasmic-facing; that stretch reads INCYCYICHSLKYDKLYSDKNS. Residues 145–165 traverse the membrane as a helical segment; it reads VCYVLLIWALTVLAIVPNLFV. Over 166 to 187 the chain is Extracellular; that stretch reads GSLQYDPRVYSCTFEQSASSAY. A helical membrane pass occupies residues 188-208; that stretch reads TIAVVFFHFILPIMIVTYCYL. Residues 209–240 are Cytoplasmic-facing; that stretch reads RIWVLVIQVRRRVKNDNRPKITPHDVRNFVTM. Residues 241-261 traverse the membrane as a helical segment; sequence FVVFVLFAVCWAPLNFIGLAV. Over 262-267 the chain is Extracellular; the sequence is AISPER. A helical membrane pass occupies residues 268-288; it reads VVPLIPEWLFVASYFMAYFNS. Over 289 to 350 the chain is Cytoplasmic; sequence CLNAIVYGVL…NNNQVKVDSV (62 aa).

It belongs to the G-protein coupled receptor 1 family.

It is found in the cell membrane. In terms of biological role, high affinity receptor for melatonin. The activity of this receptor is mediated by pertussis toxin sensitive G proteins that inhibits adenylate cyclase activity. This Danio rerio (Zebrafish) protein is Melatonin receptor type 1A-A (mtnr1aa).